Here is a 382-residue protein sequence, read N- to C-terminus: Histidinol-phosphate aminotransferase (382 aa).

N6-(pyridoxal phosphate)lysine is present on Lys-215. The tract at residues 363-382 (NIDNQNKTYSQTSSIRKGTI) is disordered.

The protein belongs to the class-II pyridoxal-phosphate-dependent aminotransferase family. Histidinol-phosphate aminotransferase subfamily. As to quaternary structure, homodimer. Pyridoxal 5'-phosphate serves as cofactor.

It carries out the reaction L-histidinol phosphate + 2-oxoglutarate = 3-(imidazol-4-yl)-2-oxopropyl phosphate + L-glutamate. Its pathway is amino-acid biosynthesis; L-histidine biosynthesis; L-histidine from 5-phospho-alpha-D-ribose 1-diphosphate: step 7/9. This is Histidinol-phosphate aminotransferase from Yersinia pestis bv. Antiqua (strain Antiqua).